A 285-amino-acid polypeptide reads, in one-letter code: Probable endonuclease 4 (285 aa).

9 residues coordinate Zn(2+): H69, H109, E145, D179, H182, H216, D229, H231, and E261.

The protein belongs to the AP endonuclease 2 family. Zn(2+) serves as cofactor.

It catalyses the reaction Endonucleolytic cleavage to 5'-phosphooligonucleotide end-products.. In terms of biological role, endonuclease IV plays a role in DNA repair. It cleaves phosphodiester bonds at apurinic or apyrimidinic (AP) sites, generating a 3'-hydroxyl group and a 5'-terminal sugar phosphate. This is Probable endonuclease 4 from Shigella boydii serotype 4 (strain Sb227).